The following is a 114-amino-acid chain: Probable 4-amino-4-deoxy-L-arabinose-phosphoundecaprenol flippase subunit ArnE (114 aa).

The next 3 membrane-spanning stretches (helical) occupy residues 38–58 (LTLR…LLWL), 64–84 (LPLS…TLAA), and 94–114 (LRHW…SWHL). Residues 43–112 (LAIAVVSLGL…IIFGILLMSW (70 aa)) enclose the EamA domain.

The protein belongs to the ArnE family. In terms of assembly, heterodimer of ArnE and ArnF.

The protein localises to the cell inner membrane. It functions in the pathway bacterial outer membrane biogenesis; lipopolysaccharide biosynthesis. Its function is as follows. Translocates 4-amino-4-deoxy-L-arabinose-phosphoundecaprenol (alpha-L-Ara4N-phosphoundecaprenol) from the cytoplasmic to the periplasmic side of the inner membrane. The chain is Probable 4-amino-4-deoxy-L-arabinose-phosphoundecaprenol flippase subunit ArnE from Yersinia pseudotuberculosis serotype O:1b (strain IP 31758).